The following is a 311-amino-acid chain: tRNA-cytidine(32) 2-sulfurtransferase (311 aa).

The PP-loop motif signature appears at 47 to 52; the sequence is SGGKDS. [4Fe-4S] cluster contacts are provided by Cys122, Cys125, and Cys213.

It belongs to the TtcA family. As to quaternary structure, homodimer. It depends on Mg(2+) as a cofactor. [4Fe-4S] cluster is required as a cofactor.

Its subcellular location is the cytoplasm. The enzyme catalyses cytidine(32) in tRNA + S-sulfanyl-L-cysteinyl-[cysteine desulfurase] + AH2 + ATP = 2-thiocytidine(32) in tRNA + L-cysteinyl-[cysteine desulfurase] + A + AMP + diphosphate + H(+). It participates in tRNA modification. Functionally, catalyzes the ATP-dependent 2-thiolation of cytidine in position 32 of tRNA, to form 2-thiocytidine (s(2)C32). The sulfur atoms are provided by the cysteine/cysteine desulfurase (IscS) system. In Escherichia coli O45:K1 (strain S88 / ExPEC), this protein is tRNA-cytidine(32) 2-sulfurtransferase.